Here is a 383-residue protein sequence, read N- to C-terminus: Inactive serine protease 54 (383 aa).

An N-terminal signal peptide occupies residues 1–20 (MAEMRGMLLMLLYISHSSSA). The Peptidase S1 domain maps to 21-258 (ICGIQKATIA…YSDWITAKTR (238 aa)). The N-linked (GlcNAc...) asparagine glycan is linked to N113. 3 cysteine pairs are disulfide-bonded: C154–C216, C185–C195, and C206–C237. The tract at residues 305 to 334 (QGQRMSTKSNKQKDAGQNFRVNRQPETSGP) is disordered. Residues 323–334 (FRVNRQPETSGP) show a composition bias toward polar residues.

The protein belongs to the peptidase S1 family. Plasma kallikrein subfamily.

The protein localises to the secreted. The protein is Inactive serine protease 54 (Prss54) of Mus musculus (Mouse).